A 282-amino-acid polypeptide reads, in one-letter code: MRWLFWTSENDKDECKCNNKPSSNSDEKPSIILNSSKDWNALSNATNWSHFLEPSNLIPTVLLTSGILFAVRIHRRYLRRIPEATNISPSYLRQRSILGKVTSVGDGDNFRIYHTPGGMLAGWGWLRKVPTSKKELKNNTIHIRIAGVDAPELAHFGRPSQPFGEEAHTWLTNRLIGRRIRAYVYRPDQYSRVVATVYAYRFLFFPQDIGLQMLREGLATIYEAKSGAEFGGPKQEKKYRDAEALAKKKGKGLWKAKASSDWESPRDFKSRMNAIDQGKGST.

A helical membrane pass occupies residues 55 to 71; that stretch reads SNLIPTVLLTSGILFAV. Residues 95 to 256 form the TNase-like domain; that stretch reads RSILGKVTSV…KKKGKGLWKA (162 aa). Residue R144 is part of the active site. D149 serves as a coordination point for Ca(2+). Active-site residues include E152 and R192.

The protein belongs to the LCL3 family.

It localises to the mitochondrion. The protein resides in the membrane. This chain is Probable endonuclease LCL3 (LCL3), found in Arthroderma otae (strain ATCC MYA-4605 / CBS 113480) (Microsporum canis).